Consider the following 746-residue polypeptide: Polyribonucleotide nucleotidyltransferase (746 aa).

Residues Asp-490 and Asp-496 each contribute to the Mg(2+) site. The KH domain maps to 557–619 (PRIETMIIGK…ATIDAAVKAI (63 aa)). The S1 motif domain maps to 629–699 (GEVYEGKISS…KTGKFKLSRK (71 aa)). Residues 701-746 (LLPKPEGYEERPPRPERGERGPRQDRGDRGPRQDRGDRGPRREYRD) are disordered. Over residues 706–746 (EGYEERPPRPERGERGPRQDRGDRGPRQDRGDRGPRREYRD) the composition is skewed to basic and acidic residues.

It belongs to the polyribonucleotide nucleotidyltransferase family. Requires Mg(2+) as cofactor.

The protein localises to the cytoplasm. The catalysed reaction is RNA(n+1) + phosphate = RNA(n) + a ribonucleoside 5'-diphosphate. Functionally, involved in mRNA degradation. Catalyzes the phosphorolysis of single-stranded polyribonucleotides processively in the 3'- to 5'-direction. This is Polyribonucleotide nucleotidyltransferase from Parabacteroides distasonis (strain ATCC 8503 / DSM 20701 / CIP 104284 / JCM 5825 / NCTC 11152).